The primary structure comprises 395 residues: Aspergillopepsin-1 (395 aa).

An N-terminal signal peptide occupies residues Met-1 to Ala-20. Residues Val-21–Ala-70 constitute a propeptide, activation peptide. Residues Tyr-86 to Ala-392 form the Peptidase A1 domain. Residues Asp-102 and Asp-284 contribute to the active site. Cys-320 and Cys-355 are joined by a disulfide.

It belongs to the peptidase A1 family. In terms of assembly, monomer.

It is found in the secreted. The enzyme catalyses Hydrolysis of proteins with broad specificity. Generally favors hydrophobic residues in P1 and P1', but also accepts Lys in P1, which leads to activation of trypsinogen. Does not clot milk.. Secreted aspartic endopeptidase that allows assimilation of proteinaceous substrates. The scissile peptide bond is attacked by a nucleophilic water molecule activated by two aspartic residues in the active site. Shows a broad primary substrate specificity. Favors hydrophobic residues at the P1 and P1' positions, but also accepts a lysine residue in the P1 position, leading to the activation of trypsinogen and chymotrypsinogen A. This Aspergillus fumigatus (strain CBS 144.89 / FGSC A1163 / CEA10) (Neosartorya fumigata) protein is Aspergillopepsin-1 (pepA).